A 181-amino-acid chain; its full sequence is tRNA (cytidine(56)-2'-O)-methyltransferase (181 aa).

S-adenosyl-L-methionine contacts are provided by residues Leu88, 115–119, and 133–140; these read GGEKV and IGNQPHSE.

It belongs to the aTrm56 family. In terms of assembly, homodimer.

The protein localises to the cytoplasm. The enzyme catalyses cytidine(56) in tRNA + S-adenosyl-L-methionine = 2'-O-methylcytidine(56) in tRNA + S-adenosyl-L-homocysteine + H(+). Its function is as follows. Specifically catalyzes the AdoMet-dependent 2'-O-ribose methylation of cytidine at position 56 in tRNAs. The polypeptide is tRNA (cytidine(56)-2'-O)-methyltransferase (Thermofilum pendens (strain DSM 2475 / Hrk 5)).